The following is a 103-amino-acid chain: MLKMNDMNVSNGDVLDSVKWLILLDIKGILIDPYSYLNRSRCKWYSIHCRLPIFYFLAPCPSDKEDLWCPFISLNPKPLKYSCSCVAIFSAFKMCPFFISWFL.

This is an uncharacterized protein from Saccharomyces cerevisiae (strain ATCC 204508 / S288c) (Baker's yeast).